The chain runs to 1517 residues: MSKFKPIEIKEDGRPRDFEAFQLRLASPEKIKSWSYGEVKKPETINYRTLKPERDGLFCAKIFGPVRDYECLCGKYKKMRFKGIKCEKCGVEVTTSKVRRSRMGHIELVTPVAHIWYVNSLPSRIGTLLGVKMKDLERVLYYEAYIVENPGDAYYDNENSKKVEFCDVLNEEQYLNLMQRYESSGFKARMGGEVVRDLLANLDLVALLNQLKEDIASTNSEAKKKTIIKRLKVVENFLNSNLNSNTNIDEVVPNRPEWMMITNLPVLPPDLRPLVALDGGKFAVSDVNDLYRRVINRNTRLKRLMELDAPEIIIRNEKRMLQEAVDALFDNGRRANAVKGANKRPLKSLSEIIKGKQGRFRQNLLGKRVDFSGRSVIVVGPKLRMDQCGLPKKMALELFKPHLLAKLEEKGYATTVKQAKKMIENKTNEVWECLEEVVKGHPVMLNRAPTLHKLSIQAFHPVLVEGKAIQLHPLVCAAFNADFDGDQMAVHVPLSQEAIAECKVLMLSSMNILLPASGRSVTVPSQDMVLGIYYLSLEKDGAKGEHKICTGIEEVMIALEAKSLDIHASIRSVVDGRKITTTAGRLIIKSILPDFVPENMWNKVMKKKDIAALVDYVYKEGGLEVSASFLDKLKDLGFEYATKAGISISIADIIVPDQKQKNIDEAKKQVREIQNSYNLGLITSGERYNKIIDIWKSTNNILSKDMMELIKKDKEGFNSIYMMADSGARGSAAQISQLAAMRGLMAKPDGSIIETPIISNFREGLNVLEYFISTHGARKGLADTALKTANAGYLTRKLIDVAQNVKVTVDDCGAHEGVEINEITADGVVIETLEERILGRVLAENIIDSITNEILFSEGTLIDEEKARVIVESGVKSVSIRTPITCKAKKGVCSKCYGINLGEGKLVKPGEAVGIISAQSIGEPGTQLTLRTFHSGGTASTDLQDRQVVAHKEGFVRFYNLNTYEDRQGKTIVANHRNAAILLVEPKIKAPFKGTIHIEHAYEDVVVSVKAKNNEAKFILRKYDLAKANELAGVSGNIEGKLYIPYSDGVEVAENESIVEVIKEGWNIPNRIPYASELLVKDGDPITQDIIAGAKGTLKFYMLKGDGLDRIKNLKKGDVVKEKGVFVVIADENDREAKRHYIPRESVIEFDDSAFVDNPKAIIAKSSKEDKTIIAEWDAYNNTVIAEVAGTINFEDIESGYSADEQIDEATGKRSLVINEYLPSGVRPAILILGEKGKMVRYQLEPKTVIYVNDGDKVKQADILAKTPKAATKSKDITGGLPRVSELFEARKPKNTAVIAEIDGVVRFDKPLRSKERIIIQAEDGSSAEYLIDKSKRIQVRDGEFIHAGEKLTDGVISSHDVLRILGEKALHYYLISEIQQVYRGQGVVISDKHIEIIVSQMLRQVKIVDSGHTNFIVGDLVSRRKFREENERILKYGGEPAVAEPVLLGVTRAAIGSDSVISAASFQETTKVLTEASIAGKFDYLEDLKENVILGRMIPVGTGLYSEQNIKLKQQN.

Residues C71, C73, C86, and C89 each contribute to the Zn(2+) site. 3 residues coordinate Mg(2+): D482, D484, and D486. Residues C812, C886, C893, and C896 each coordinate Zn(2+).

Belongs to the RNA polymerase beta' chain family. As to quaternary structure, the RNAP catalytic core consists of 2 alpha, 1 beta, 1 beta' and 1 omega subunit. When a sigma factor is associated with the core the holoenzyme is formed, which can initiate transcription. Requires Mg(2+) as cofactor. Zn(2+) is required as a cofactor.

The catalysed reaction is RNA(n) + a ribonucleoside 5'-triphosphate = RNA(n+1) + diphosphate. In terms of biological role, DNA-dependent RNA polymerase catalyzes the transcription of DNA into RNA using the four ribonucleoside triphosphates as substrates. The sequence is that of DNA-directed RNA polymerase subunit beta' from Campylobacter lari (strain RM2100 / D67 / ATCC BAA-1060).